Here is a 99-residue protein sequence, read N- to C-terminus: UPF0122 protein UUR10_0158 (99 aa).

The protein belongs to the UPF0122 family.

Functionally, might take part in the signal recognition particle (SRP) pathway. This is inferred from the conservation of its genetic proximity to ftsY/ffh. May be a regulatory protein. In Ureaplasma urealyticum serovar 10 (strain ATCC 33699 / Western), this protein is UPF0122 protein UUR10_0158.